Reading from the N-terminus, the 327-residue chain is Leucotoxin LukD (327 aa).

The N-terminal stretch at 1-26 (MKIEKLGKSSVASSIALLLLSNTVDA) is a signal peptide.

The protein belongs to the aerolysin family. In terms of assembly, toxicity requires sequential binding and synergistic association of a class S and a class F component which form heterooligomeric complexes. LukE (class S) associates with LukD (class F). LukD can also associate with HlgA.

Its subcellular location is the secreted. Its function is as follows. Part of a bi-component leucotoxin that acts by forming pores in the membrane of the target cells. LukE-LukD is as effective as the Panton-Valentine leucocidin (PVL) for inducing dermonecrosis when injected in the rabbit skin, but not hemolytic and poorly leucotoxic on human blood cells compared to other leucotoxins expressed by S.aureus. HlgA-LukD is a Ca(2+) channel inducer. The protein is Leucotoxin LukD (lukD) of Staphylococcus aureus.